Here is a 302-residue protein sequence, read N- to C-terminus: Oxaloacetate decarboxylase 2 (302 aa).

S50 contributes to the substrate binding site. D88 provides a ligand contact to Mg(2+). Positions 159 and 235 each coordinate substrate.

Belongs to the isocitrate lyase/PEP mutase superfamily. Oxaloacetate decarboxylase family. Homotetramer; dimer of dimers. The cofactor is Mg(2+).

The enzyme catalyses oxaloacetate + H(+) = pyruvate + CO2. Functionally, catalyzes the decarboxylation of oxaloacetate into pyruvate. Seems to play a role in maintaining cellular concentrations of bicarbonate and pyruvate. This is Oxaloacetate decarboxylase 2 from Pseudomonas putida (strain W619).